We begin with the raw amino-acid sequence, 661 residues long: DNA ligase (661 aa).

NAD(+)-binding positions include 31-35 (DSGYD), 80-81 (SL), and Glu-109. The N6-AMP-lysine intermediate role is filled by Lys-111. The NAD(+) site is built by Arg-132, Glu-167, Lys-283, and Lys-307. Positions 401, 404, 419, and 424 each coordinate Zn(2+). The BRCT domain maps to 582–661 (AGEQLLQGKT…AGFLNLLGLS (80 aa)).

This sequence belongs to the NAD-dependent DNA ligase family. LigA subfamily. The cofactor is Mg(2+). Requires Mn(2+) as cofactor.

The catalysed reaction is NAD(+) + (deoxyribonucleotide)n-3'-hydroxyl + 5'-phospho-(deoxyribonucleotide)m = (deoxyribonucleotide)n+m + AMP + beta-nicotinamide D-nucleotide.. DNA ligase that catalyzes the formation of phosphodiester linkages between 5'-phosphoryl and 3'-hydroxyl groups in double-stranded DNA using NAD as a coenzyme and as the energy source for the reaction. It is essential for DNA replication and repair of damaged DNA. In Syntrophomonas wolfei subsp. wolfei (strain DSM 2245B / Goettingen), this protein is DNA ligase.